Consider the following 381-residue polypeptide: MDEPPDESLNHENTTRAPDNEKNNIEGAGQALHRGSEHAGVGSSEPTGDKVSGQANAGSRQTGRRTSEEAEQRSSQPTEHRLPGHAERRASQQAERRLSERRTSQPPNQQLPSHSERKTSGKIDGQESLLSEQTDQETSEFDDLIPSASTDYLSARSQQQEYNQHGYWTEDSSDPHRLSEDLEKDYTRVKHITEKQAGYRSYYKTLAHIESRTLTDTNDYRETGQRLQPCTFEDSEAELPSKVSTTEETESATTIQAYNTQDTELTTSTSHEKLPSITTKVYYSSSPEKIQTTEYTSDTTPVFDQGRSSQRSSQSSRWRFPPIVFEDPYHVALRYVEKHNILHIFQQITENLVYERPDDPLYFMLDQVQNMIKHRDERQSD.

2 disordered regions span residues 1–176 and 292–317; these read MDEP…SDPH and TTEY…QSSR. Basic and acidic residues-rich tracts occupy residues 8 to 24 and 65 to 103; these read SLNH…EKNN and RTSE…ERRT. Residues 104–113 show a composition bias toward polar residues; that stretch reads SQPPNQQLPS. Over residues 114–125 the composition is skewed to basic and acidic residues; the sequence is HSERKTSGKIDG. The span at 134 to 143 shows a compositional bias: acidic residues; sequence TDQETSEFDD. 2 stretches are compositionally biased toward polar residues: residues 147–163 and 292–302; these read SAST…QEYN and TTEYTSDTTPV. Positions 307 to 317 are enriched in low complexity; sequence RSSQRSSQSSR.

In terms of tissue distribution, testis-specific.

It localises to the nucleus. The sequence is that of Testis-specific expressed protein 55 from Mus musculus (Mouse).